Here is a 227-residue protein sequence, read N- to C-terminus: E3 ubiquitin-protein ligase ZNRF1 (227 aa).

A disordered region spans residues 1 to 42 (MGGKQSTAARSRGPFPGVSTDDSAVPPPGGAPHFGHYRTGGG). The N-myristoyl glycine moiety is linked to residue glycine 2. A required for endosomal and lysosomal localization and myristoylation region spans residues 2–10 (GGKQSTAAR). 3 positions are modified to phosphoserine: serine 50, serine 52, and serine 53. The interval 65–105 (GGVPFSLYTPASRGTGDSERAPGGGGSTSDSTYAHGNGYQE) is disordered. Tyrosine 103 carries the post-translational modification Phosphotyrosine. Serine 123 carries the post-translational modification Phosphoserine. An RING-type; atypical zinc finger spans residues 184–225 (CVICLEELLQGDTIARLPCLCIYHKSCIDSWFEVNRSCPEHP).

Interacts with AKT1, GLUL and TUBB2A. Interacts with ZNRF2. Interacts (via its RING domain) with UBE2N. Interacts (when phosphorylated) with YWHAE. Post-translationally, N-myristoylation targets ZNRF1 to intracellular membranes. In terms of processing, phosphorylated by SRC at Tyr-103; leading to 'Lys-63'-linked ubiquitination of TLR3, lysosomal trafficking and degradation.

The protein localises to the endosome. It is found in the lysosome. Its subcellular location is the membrane. The protein resides in the cytoplasmic vesicle. It localises to the secretory vesicle. The protein localises to the synaptic vesicle membrane. It catalyses the reaction S-ubiquitinyl-[E2 ubiquitin-conjugating enzyme]-L-cysteine + [acceptor protein]-L-lysine = [E2 ubiquitin-conjugating enzyme]-L-cysteine + N(6)-ubiquitinyl-[acceptor protein]-L-lysine.. Its pathway is protein modification; protein ubiquitination. In terms of biological role, E3 ubiquitin-protein ligase that plays a role in different processes including cell differentiation, receptor recycling or regulation of inflammation. Mediates the ubiquitination of AKT1 and GLUL, thereby playing a role in neuron cells differentiation. Plays a role in the establishment and maintenance of neuronal transmission and plasticity. Regulates Schwann cells differentiation by mediating ubiquitination of GLUL. Promotes neurodegeneration by mediating 'Lys-48'-linked polyubiquitination and subsequent degradation of AKT1 in axons: degradation of AKT1 prevents AKT1-mediated phosphorylation of GSK3B, leading to GSK3B activation and phosphorylation of DPYSL2/CRMP2 followed by destabilization of microtubule assembly in axons. Ubiquitinates the Na(+)/K(+) ATPase alpha-1 subunit/ATP1A1 and thereby influences its endocytosis and/or degradation. Controls ligand-induced EGFR signaling via mediating receptor ubiquitination and recruitment of the ESCRT machinery. Acts as a negative feedback mechanism controlling TLR3 trafficking by mediating TLR3 'Lys-63'-linked polyubiquitination to reduce type I IFN production. Modulates inflammation by promoting caveolin-1/CAV1 ubiquitination and degradation to regulate TLR4-activated immune response. The sequence is that of E3 ubiquitin-protein ligase ZNRF1 (Znrf1) from Mus musculus (Mouse).